We begin with the raw amino-acid sequence, 566 residues long: Serine/threonine-protein kinase PknE (566 aa).

Over 1–337 (MDGTAESREG…PLPRSARQPW (337 aa)) the chain is Cytoplasmic. Phosphoserine; by autocatalysis is present on serine 7. Phosphothreonine; by autocatalysis is present on threonine 11. The 260-residue stretch at 16-275 (YRLRRLVGRG…DLSAAAHAAL (260 aa)) folds into the Protein kinase domain. ATP-binding positions include 22–30 (VGRGGMGDV) and lysine 45. Threonine 50 and threonine 59 each carry phosphothreonine; by autocatalysis. Aspartate 139 acts as the Proton acceptor in catalysis. Phosphothreonine; by autocatalysis occurs at positions 170, 175, and 178. Positions 296 to 330 (PVPSTHPVSPGTRWPQPTPWAGGAPPWGPPSSPLP) are disordered. A helical transmembrane segment spans residues 338–358 (LWVGVAVAVVVALAGGLGIAL). Residues 359–566 (AHPWRSSGPR…DPSWLARLIG (208 aa)) are Extracellular-facing.

It belongs to the protein kinase superfamily. Ser/Thr protein kinase family. In terms of processing, autophosphorylated on serine and threonine residues. Dephosphorylated by PstP.

The protein localises to the cell membrane. The enzyme catalyses L-seryl-[protein] + ATP = O-phospho-L-seryl-[protein] + ADP + H(+). It carries out the reaction L-threonyl-[protein] + ATP = O-phospho-L-threonyl-[protein] + ADP + H(+). The polypeptide is Serine/threonine-protein kinase PknE (pknE) (Mycobacterium bovis (strain ATCC BAA-935 / AF2122/97)).